A 126-amino-acid polypeptide reads, in one-letter code: MTATVNTSDALARLAAVIESRLPARGGDPDKSYVARLLHKGPDAFLKKIGEEATEVVMAAKDADHGGDRTKIVNEVADLWFHTMVALAHYGFSPGEVIAELERREGTSGIEEKALRKAQAREASND.

This sequence belongs to the PRA-PH family.

The protein localises to the cytoplasm. It catalyses the reaction 1-(5-phospho-beta-D-ribosyl)-ATP + H2O = 1-(5-phospho-beta-D-ribosyl)-5'-AMP + diphosphate + H(+). It functions in the pathway amino-acid biosynthesis; L-histidine biosynthesis; L-histidine from 5-phospho-alpha-D-ribose 1-diphosphate: step 2/9. In Variovorax paradoxus (strain S110), this protein is Phosphoribosyl-ATP pyrophosphatase.